The chain runs to 113 residues: TYRO protein tyrosine kinase-binding protein (113 aa).

The N-terminal stretch at 1-27 (MGGLEPCSRLLLLPLLLAVGGLRPVQA) is a signal peptide. The Extracellular portion of the chain corresponds to 28–40 (QAQSDCSCSTVSP). Residues 41–61 (GVLAGIVLGDLVLTVLIALAV) form a helical membrane-spanning segment. Asp50 is a Ca(2+) binding site. Topologically, residues 62–113 (YFLGRLVPRGRGAAEAATRKQRITETESPYQELQGQRSDVYSDLNTQRPYYK) are cytoplasmic. The interval 75–113 (AEAATRKQRITETESPYQELQGQRSDVYSDLNTQRPYYK) is disordered. An ITAM domain is found at 80 to 108 (RKQRITETESPYQELQGQRSDVYSDLNTQ). A compositionally biased stretch (polar residues) spans 87 to 113 (TESPYQELQGQRSDVYSDLNTQRPYYK). Phosphotyrosine occurs at positions 91 and 102.

Belongs to the TYROBP family. Homodimer; disulfide-linked. Homotrimer; disulfide-linked. Homotetramer; disulfide-linked. Homotrimers and homotetramers form when low levels of partner receptors are available and is competitive with assembly with interacting receptors. They may represent alternative oligomerization states or may be intermediates in the receptor assembly process. Binding of a metal cation aids in homooligomerization through coordination of the metal ion by the subunits of the oligomer. Interacts with TREM1. Interacts with TREM2. Interacts with CLECSF5. Interacts with CD300LB and CD300C2. Interacts with CD300E. Interacts (via ITAM domain) with SYK (via SH2 domains); activates SYK mediating neutrophils and macrophages integrin-mediated activation. Interacts with KLRC2. Interacts with CD300H. Interacts with KLRD1. Post-translationally, following ligand binding by associated receptors, tyrosine phosphorylated in the ITAM domain which leads to activation of additional tyrosine kinases and subsequent cell activation.

It localises to the cell membrane. In terms of biological role, adapter protein which non-covalently associates with activating receptors found on the surface of a variety of immune cells to mediate signaling and cell activation following ligand binding by the receptors. TYROBP is tyrosine-phosphorylated in the ITAM domain following ligand binding by the associated receptors which leads to activation of additional tyrosine kinases and subsequent cell activation. Also has an inhibitory role in some cells. Non-covalently associates with activating receptors of the CD300 family to mediate cell activation. Also mediates cell activation through association with activating receptors of the CD200R family. Required for neutrophil activation mediated by integrin. Required for the activation of myeloid cells mediated by the CLEC5A/MDL1 receptor. Associates with natural killer (NK) cell receptors such as the KLRD1/KLRC2 heterodimer to mediate NK cell activation. Associates with TREM1 to mediate activation of neutrophils and monocytes. Associates with TREM2 on monocyte-derived dendritic cells to mediate up-regulation of chemokine receptor CCR7 and dendritic cell maturation and survival. Association with TREM2 mediates cytokine-induced formation of multinucleated giant cells which are formed by the fusion of macrophages. Stabilizes the TREM2 C-terminal fragment (TREM2-CTF) produced by TREM2 ectodomain shedding which suppresses the release of pro-inflammatory cytokines. In microglia, required with TREM2 for phagocytosis of apoptotic neurons. Required with ITGAM/CD11B in microglia to control production of microglial superoxide ions which promote the neuronal apoptosis that occurs during brain development. Promotes pro-inflammatory responses in microglia following nerve injury which accelerates degeneration of injured neurons. Positively regulates the expression of the IRAK3/IRAK-M kinase and IL10 production by liver dendritic cells and inhibits their T cell allosimulatory ability. Negatively regulates B cell proliferation. Required for CSF1-mediated osteoclast cytoskeletal organization. Positively regulates multinucleation during osteoclast development. The sequence is that of TYRO protein tyrosine kinase-binding protein from Macaca mulatta (Rhesus macaque).